Consider the following 1408-residue polypeptide: DNA-directed RNA polymerase subunit beta' (1408 aa).

4 residues coordinate Zn(2+): Cys70, Cys72, Cys85, and Cys88. Asp460, Asp462, and Asp464 together coordinate Mg(2+). Zn(2+)-binding residues include Cys814, Cys888, Cys895, and Cys898.

Belongs to the RNA polymerase beta' chain family. In terms of assembly, the RNAP catalytic core consists of 2 alpha, 1 beta, 1 beta' and 1 omega subunit. When a sigma factor is associated with the core the holoenzyme is formed, which can initiate transcription. It depends on Mg(2+) as a cofactor. Requires Zn(2+) as cofactor.

The enzyme catalyses RNA(n) + a ribonucleoside 5'-triphosphate = RNA(n+1) + diphosphate. Its function is as follows. DNA-dependent RNA polymerase catalyzes the transcription of DNA into RNA using the four ribonucleoside triphosphates as substrates. The sequence is that of DNA-directed RNA polymerase subunit beta' from Baumannia cicadellinicola subsp. Homalodisca coagulata.